Consider the following 201-residue polypeptide: Large ribosomal subunit protein uL4 (201 aa).

The interval 43 to 71 (TRAQKTRSDVSGGGKKPWRQKGTGRARSG) is disordered.

Belongs to the universal ribosomal protein uL4 family. Part of the 50S ribosomal subunit.

One of the primary rRNA binding proteins, this protein initially binds near the 5'-end of the 23S rRNA. It is important during the early stages of 50S assembly. It makes multiple contacts with different domains of the 23S rRNA in the assembled 50S subunit and ribosome. Functionally, forms part of the polypeptide exit tunnel. The chain is Large ribosomal subunit protein uL4 from Psychromonas ingrahamii (strain DSM 17664 / CCUG 51855 / 37).